A 486-amino-acid polypeptide reads, in one-letter code: Protein DETOXIFICATION 16 (486 aa).

12 helical membrane-spanning segments follow: residues 35–55 (GPLI…VMFV), 68–88 (IATS…ASAL), 117–137 (LASI…VFFG), 142–162 (IATL…AYGL), 179–199 (VVFC…VLVF), 207–227 (GAAL…FCYV), 259–279 (ALMV…SGLL), 288–308 (VLSI…GLSG), 331–351 (RVVI…LILI), 365–385 (VVSY…LDSL), 401–421 (IGAI…GLLL), and 433–453 (WLGI…VTIF).

Belongs to the multi antimicrobial extrusion (MATE) (TC 2.A.66.1) family.

The protein localises to the membrane. This Arabidopsis thaliana (Mouse-ear cress) protein is Protein DETOXIFICATION 16.